The following is a 204-amino-acid chain: ATP synthase subunit b 2 (204 aa).

Residues 50–70 (IFWLAVTFGLLLFLMSKVALP) form a helical membrane-spanning segment.

The protein belongs to the ATPase B chain family. F-type ATPases have 2 components, F(1) - the catalytic core - and F(0) - the membrane proton channel. F(1) has five subunits: alpha(3), beta(3), gamma(1), delta(1), epsilon(1). F(0) has three main subunits: a(1), b(2) and c(10-14). The alpha and beta chains form an alternating ring which encloses part of the gamma chain. F(1) is attached to F(0) by a central stalk formed by the gamma and epsilon chains, while a peripheral stalk is formed by the delta and b chains.

The protein resides in the cell inner membrane. In terms of biological role, f(1)F(0) ATP synthase produces ATP from ADP in the presence of a proton or sodium gradient. F-type ATPases consist of two structural domains, F(1) containing the extramembraneous catalytic core and F(0) containing the membrane proton channel, linked together by a central stalk and a peripheral stalk. During catalysis, ATP synthesis in the catalytic domain of F(1) is coupled via a rotary mechanism of the central stalk subunits to proton translocation. Component of the F(0) channel, it forms part of the peripheral stalk, linking F(1) to F(0). The b'-subunit is a diverged and duplicated form of b found in plants and photosynthetic bacteria. The chain is ATP synthase subunit b 2 (atpF2) from Rhodospirillum centenum (strain ATCC 51521 / SW).